Reading from the N-terminus, the 1022-residue chain is MYFCWGADSRELQRRRTAGSPGAELLQAASGERHSLLLLTNHRVLSCGDNSRGQLGRRGAQRGELPEPIQALETLIVDLVSCGKEHSLAVCHKGRVFAWGAGSEGQLGIGEFKEISFTPKKIMTLNDIKIIQVSCGHYHSLALSKDSQVFSWGKNSHGQLGLGKEFPSQASPQRVRSLEGIPLAQVAAGGAHSFALSLCGTSFGWGSNSAGQLALSGRNVPVQSNKPLSVGALKNLGVVYISCGDAHTAVLTQDGKVFTFGDNRSGQLGYSPTPEKRGPQLVERIDGLVSQIDCGSYHTLAYVHTTGQVVSFGHGPSDTSKPTHPEALTENFDISCLISAEDFVDVQVKHIFAGTYANFVTTHQDTSSTRAPGKTLPEISRISQSMAEKWIAVKRRSTEHEMAKSEIRMIFSSPACLTASFLKKRGTGETTSIDVDLEMARDTFKKLTKKEWISSMITTCLEDDLLRALPCHSPHQEALSVFLLLPECPVMHDSKNWKNLVVPFAKAVCEMSKQSLQVLKKCWAFLQESSLNPLIQMLKAAIISQLLHQTKTEQDHCNVKALLGMMKELHKVNKANCRLPENTFNINELSNLLNFYIDRGRQLFRDNHLIPAETPSPVIFSDFPFIFNSLSKIKLLQADSHIKMQMSEKKAYMLMHETILQKKDEFPPSPRFILRVRRSRLVKDALRQLSQAEATDFCKVLVVEFINEICPESGGVSSEFFHCMFEEMTKPEYGMFMYPEMGSCMWFPAKPKPEKKRYFLFGMLCGLSLFNLNVANLPFPLALYKKLLDQKPSLEDLKELSPRLGKSLQEVLDDAADDIGDALCIRFSIHWDQNDVDLIPNGISIPVDQTNKRDYVSKYIDYIFNVSVKAVYEEFQRGFYRVCEKEILRHFYPEELMTAIIGNTDYDWKQFEQNSKYEQGYQKSHPTIQLFWKAFHKLTLDEKKKFLFFLTGRDRLHARGIQKMEIVFRCPETFSERDHPTSITCHNILSLPKYSTMERMEEALQVAINNNRGFVSPMLTQS.

RCC1 repeat units lie at residues 41–92 (NHRV…AVCH), 93–145 (KGRV…ALSK), 147–198 (SQVF…ALSL), 200–253 (GTSF…VLTQ), and 254–304 (DGKV…AYVH). An HECT domain is found at 693-1017 (EATDFCKVLV…INNNRGFVSP (325 aa)). Cys-985 acts as the Glycyl thioester intermediate in catalysis.

Detected in brain, heart, placenta and testis.

The protein localises to the cytoplasm. Its subcellular location is the cytosol. It carries out the reaction S-ubiquitinyl-[E2 ubiquitin-conjugating enzyme]-L-cysteine + [acceptor protein]-L-lysine = [E2 ubiquitin-conjugating enzyme]-L-cysteine + N(6)-ubiquitinyl-[acceptor protein]-L-lysine.. It functions in the pathway protein modification; protein ubiquitination. In terms of biological role, E3 ubiquitin-protein ligase which accepts ubiquitin from an E2 ubiquitin-conjugating enzyme in the form of a thioester and then directly transfers the ubiquitin to targeted substrates. The sequence is that of Probable E3 ubiquitin-protein ligase HERC6 (HERC6) from Homo sapiens (Human).